The chain runs to 174 residues: UPF0316 protein lwe1794 (174 aa).

3 helical membrane-spanning segments follow: residues 4 to 24, 36 to 56, and 62 to 82; these read GLFI…IYTV, LAAL…SLVL, and IANV…GMKI.

Belongs to the UPF0316 family.

The protein localises to the cell membrane. In Listeria welshimeri serovar 6b (strain ATCC 35897 / DSM 20650 / CCUG 15529 / CIP 8149 / NCTC 11857 / SLCC 5334 / V8), this protein is UPF0316 protein lwe1794.